We begin with the raw amino-acid sequence, 1356 residues long: DNA-directed RNA polymerase subunit beta (1356 aa).

It belongs to the RNA polymerase beta chain family. As to quaternary structure, the RNAP catalytic core consists of 2 alpha, 1 beta, 1 beta' and 1 omega subunit. When a sigma factor is associated with the core the holoenzyme is formed, which can initiate transcription.

The enzyme catalyses RNA(n) + a ribonucleoside 5'-triphosphate = RNA(n+1) + diphosphate. Its function is as follows. DNA-dependent RNA polymerase catalyzes the transcription of DNA into RNA using the four ribonucleoside triphosphates as substrates. This chain is DNA-directed RNA polymerase subunit beta, found in Caulobacter vibrioides (strain ATCC 19089 / CIP 103742 / CB 15) (Caulobacter crescentus).